The chain runs to 485 residues: Keratin, type I cytoskeletal 14 (485 aa).

Positions 1–15 are enriched in polar residues; sequence MATCSRQFTSSSSMK. The disordered stretch occupies residues 1–21; the sequence is MATCSRQFTSSSSMKGSCGIG. The head stretch occupies residues 1–121; it reads MATCSRQFTS…GLGDGLLVGS (121 aa). Residues 122-157 form a coil 1A region; sequence EKVTMQNLNDRLATYLDKVRALEEANSDLEVKIRDW. Residues 122-433 form the IF rod domain; it reads EKVTMQNLND…RLLEGEDAHL (312 aa). The linker 1 stretch occupies residues 158–175; it reads YQRQRPTEIKDYSPYFKT. The tract at residues 176–267 is coil 1B; sequence IEDLKSKILA…KNHEEEMASM (92 aa). Residues 268-290 are linker 12; that stretch reads RGQVGGDVNVEMDAAPGVDLSRI. Residues 291-429 are coil 2; that stretch reads LNEMRDQYEK…ATYRRLLEGE (139 aa). The interval 430–485 is tail; it reads DAHLSSAQFSSSSQFSSGSQSSRDVTSTNRQIRTKVMDVHDGKVVSTHEQVLRTKN. The tract at residues 432-485 is interaction with Type I keratins and keratin filaments; it reads HLSSAQFSSSSQFSSGSQSSRDVTSTNRQIRTKVMDVHDGKVVSTHEQVLRTKN. The segment covering 437–451 has biased composition (low complexity); the sequence is QFSSSSQFSSGSQSS. Residues 437–458 form a disordered region; the sequence is QFSSSSQFSSGSQSSRDVTSTN. Residue serine 448 is modified to Phosphoserine.

The protein belongs to the intermediate filament family. As to quaternary structure, heterotetramer of two type I and two type II keratins. Forms a disulfide-linked heterodimer (via 2B domains) with KRT5 (via 2B domains). Forms a heterodimer with KRT1; the interaction is more abundant in the absence of KRT5. Interacts with TRADD and with keratin filaments. Associates with other type I keratins. Interacts with EPPK1. Interacts with KLHL24. Interacts with PKP1 (via N-terminus) and PKP2. A disulfide bond is formed between rather than within filaments and promotes the formation of a keratin filament cage around the nucleus. In terms of processing, ubiquitinated by the BCR(KLHL24) E3 ubiquitin ligase complex. In terms of tissue distribution, expressed in most cells of squamous cell carcinomas, in spinous and suprabasal cells around the branching papillary region of papillomas, and weakly in a few proliferative cells of hyperplastic tissue.

The protein resides in the cytoplasm. It is found in the nucleus. Functionally, the nonhelical tail domain is involved in promoting KRT5-KRT14 filaments to self-organize into large bundles and enhances the mechanical properties involved in resilience of keratin intermediate filaments in vitro. This is Keratin, type I cytoskeletal 14 (Krt14) from Rattus norvegicus (Rat).